The primary structure comprises 336 residues: MKVGIIGASGYTGGELLRLLVSHPDVRLELATSRSLAGKPVSSTHRHLTGFLDLKYENPVSEEIRERCDVVFVAVPHGTAMNYVPELLDGSTKVIDLSADYRLDTPVFENIYGIKHSDPRKAVYGLVELHPEAAREEFVANPGCFPTGANLAAAPLAAAGLIDIAVFDSKTGISGAGISPTETSHYPNIAENIIPYKLTAHRHRAEILQELTRLDGKLRNISFTPHVIPSIRGILTTAHLFTKEPLSTGDVQEIYEEFYRDKPFVRLPGGVPSLTAVRGSNFCDIGFEADKENNRVVVLSAIDNLVKGASGQAIQNMNLMFGLAETRGLWLPAAAP.

Residue cysteine 144 is part of the active site.

The protein belongs to the NAGSA dehydrogenase family. Type 1 subfamily.

It localises to the cytoplasm. The catalysed reaction is N-acetyl-L-glutamate 5-semialdehyde + phosphate + NADP(+) = N-acetyl-L-glutamyl 5-phosphate + NADPH + H(+). The protein operates within amino-acid biosynthesis; L-arginine biosynthesis; N(2)-acetyl-L-ornithine from L-glutamate: step 3/4. In terms of biological role, catalyzes the NADPH-dependent reduction of N-acetyl-5-glutamyl phosphate to yield N-acetyl-L-glutamate 5-semialdehyde. This is N-acetyl-gamma-glutamyl-phosphate reductase from Methanosarcina acetivorans (strain ATCC 35395 / DSM 2834 / JCM 12185 / C2A).